Here is a 410-residue protein sequence, read N- to C-terminus: Lipid droplet-regulating VLDL assembly factor AUP1 (410 aa).

N-acetylmethionine is present on methionine 1. Over 1 to 20 the chain is Cytoplasmic; that stretch reads MEPPPAPGPERLFDSHRLPS. The stretch at 21–41 is an intramembrane region; the sequence is DGFLLLALLLYAPVGLCLLVL. Over 42-410 the chain is Cytoplasmic; sequence RLFLGLHVFL…FRERQAQEAE (369 aa). The disordered stretch occupies residues 258–295; sequence RLTPADKAEHMKRQRHPRLRPQSVQSSFPSPPSPSSDV. At serine 292 the chain carries Phosphoserine. Residues 296 to 338 enclose the CUE domain; that stretch reads QLTTLAHRVKEVLPHVPLNVIQRDLARTGCVDLTITNLLEGAV. Positions 344 to 369 are disordered; sequence DVTEGSQSPPAPSAPKFPSSGLATPQ. The residue at position 363 (serine 363) is a Phosphoserine. Threonine 367 is subject to Phosphothreonine.

It belongs to the AUP1 family. As to quaternary structure, identified in a complex that contains SEL1L, OS9, FAF2/UBXD8, UBE2J1/UBC6E and AUP1. Interacts with the cytoplasmic tail of ITGA2B, ITGA1, ITGA2, ITGA5, ITGAV and ITGAM. Interacts (via C-terminus) with UBE2G2; the interaction recruits UBE2G2 to lipid droplets. Interacts with ubiquitin ligases AMFR/gp78 and RNF139/TRC8; this promotes interaction of UBE2G2 with AMFR and RNF139. Interacts with apolipoprotein APOB. Post-translationally, monoubiquitinated and diubiquitinated. In terms of tissue distribution, ubiquitous.

Its subcellular location is the endoplasmic reticulum membrane. The protein localises to the lipid droplet. In terms of biological role, plays a role in the translocation of terminally misfolded proteins from the endoplasmic reticulum lumen to the cytoplasm and their degradation by the proteasome. Plays a role in lipid droplet formation. Induces lipid droplet clustering. Recruits ubiquitin-conjugating enzyme UBE2G2 to lipid droplets which facilitates its interaction with ubiquitin ligases AMFR/gp78 and RNF139/TRC8, leading to sterol-induced ubiquitination of HMGCR and its subsequent proteasomal degradation. Also required for the degradation of INSIG1, SREBF1 and SREBF2. Plays a role in regulating assembly and secretion of very low density lipoprotein particles and stability of apolipoprotein APOB. The polypeptide is Lipid droplet-regulating VLDL assembly factor AUP1 (Mus musculus (Mouse)).